A 214-amino-acid chain; its full sequence is Rho-related GTP-binding protein RhoJ (214 aa).

2 S-palmitoyl cysteine lipidation sites follow: Cys3 and Cys11. Residues Ala31–Cys36, Phe46–Thr53, Asp75–Gln79, Thr133–Asp136, and Ala177–Leu178 each bind GTP. The short motif at Tyr50–Tyr58 is the Effector region element. At Cys211 the chain carries Cysteine methyl ester. Residue Cys211 is the site of S-farnesyl cysteine attachment. The propeptide at Ala212–Ile214 is removed in mature form.

The protein belongs to the small GTPase superfamily. Rho family. In terms of assembly, interacts with the CRIB domains of proteins such as Pak1 and Was/Wasp. Interacts with GLUL. In terms of processing, palmitoylated; regulates localization to the plasma membrane and may be mediated by GLUL. Highly expressed in heart with moderate levels in lung and liver. Very low levels detected in brain, spleen, skeletal muscle, kidney and testis.

Its subcellular location is the cell membrane. Functionally, plasma membrane-associated small GTPase specifically involved in angiogenesis. Required for endothelial cell migration during vascular development via its interaction with GLUL. Elicits the formation of F-actin-rich structures, thereby regulating endothelial cell migration. The chain is Rho-related GTP-binding protein RhoJ (Rhoj) from Mus musculus (Mouse).